We begin with the raw amino-acid sequence, 316 residues long: Porphobilinogen deaminase (316 aa).

Cys242 is modified (S-(dipyrrolylmethanemethyl)cysteine).

Belongs to the HMBS family. In terms of assembly, monomer. Dipyrromethane serves as cofactor.

It carries out the reaction 4 porphobilinogen + H2O = hydroxymethylbilane + 4 NH4(+). It functions in the pathway porphyrin-containing compound metabolism; protoporphyrin-IX biosynthesis; coproporphyrinogen-III from 5-aminolevulinate: step 2/4. Tetrapolymerization of the monopyrrole PBG into the hydroxymethylbilane pre-uroporphyrinogen in several discrete steps. This is Porphobilinogen deaminase from Thioalkalivibrio sulfidiphilus (strain HL-EbGR7).